The chain runs to 232 residues: Floral homeotic protein APETALA 3 (232 aa).

The 55-residue stretch at 3–57 folds into the MADS-box domain; that stretch reads RGKIQIKRIENQTNRQVTYSKRRNGLFKKAHELTVLCDARVSIIMFSSSNKLHEY. Residues 75-164 adopt a coiled-coil conformation; it reads SDVDVWATQY…KSQQDIQKNL (90 aa). In terms of domain architecture, K-box spans 84–174; the sequence is YERMQETKRK…IHELELRAED (91 aa).

As to quaternary structure, forms a heterodimer with PISTILLATA, capable of binding to CArG-box sequences. AP3/PI heterodimer binds AP1 or SEP3 to form complexes. Expressed in petals and stamens.

It is found in the nucleus. Functionally, probable transcription factor involved in the genetic control of flower development. Is required for normal development of petals and stamens in the wild-type flower. Forms a heterodimer with PISTILLATA that is required for autoregulation of both AP3 and PI genes. AP3/PI heterodimer interacts with APETALA1 or SEPALLATA3 to form a ternary complex that could be responsible for the regulation of the genes involved in the flower development. AP3/PI heterodimer activates the expression of NAP. AP3/PI prevents GATA22/GNL and GATA21/GNC expression. The sequence is that of Floral homeotic protein APETALA 3 (AP3) from Arabidopsis thaliana (Mouse-ear cress).